A 290-amino-acid polypeptide reads, in one-letter code: UPF0761 membrane protein YihY (290 aa).

The next 6 helical transmembrane spans lie at 44-64 (LLSL…FPMF), 104-124 (VGAC…DSAL), 140-160 (FAVY…SLAI), 183-203 (IFPL…VPTI), 210-230 (AIVG…GFAL), and 244-264 (VLAV…IVLL).

The protein belongs to the UPF0761 family.

The protein localises to the cell inner membrane. This chain is UPF0761 membrane protein YihY, found in Escherichia coli O139:H28 (strain E24377A / ETEC).